The primary structure comprises 410 residues: Putative competence-damage inducible protein (410 aa).

It belongs to the CinA family.

In Finegoldia magna (strain ATCC 29328 / DSM 20472 / WAL 2508) (Peptostreptococcus magnus), this protein is Putative competence-damage inducible protein.